A 1015-amino-acid chain; its full sequence is Collagen alpha-2(I) chain (1015 aa).

The interval Ser1–Ala1015 is disordered. A 4-hydroxyproline mark is found at Pro10 and Pro13. Over residues Lys20–Gly30 the composition is skewed to gly residues. A 4-hydroxyproline modification is found at Pro38. Over residues Gln43–Lys69 the composition is skewed to low complexity. Positions Ala70 to Glu84 are enriched in basic and acidic residues. Residue Lys106 is modified to 5-hydroxylysine; alternate. Lys106 carries an O-linked (Gal...) hydroxylysine; alternate glycan. Low complexity-rich tracts occupy residues Val140–Pro169, Ala194–Pro208, and Pro235–Val250. Gly residues predominate over residues Gly302–Gly311. The segment covering Pro324–Ser340 has biased composition (low complexity). 4-hydroxyproline is present on residues Pro346 and Pro349. The span at Gly441–Gly450 shows a compositional bias: gly residues. Residues Pro497–Pro514 show a composition bias toward low complexity. Residues Gly534 to Gly545 show a composition bias toward gly residues. Low complexity-rich tracts occupy residues Val568–Ser612 and Val619–Ala639. The span at Lys640–Lys649 shows a compositional bias: basic and acidic residues. Residues Pro657–Asn670 show a composition bias toward low complexity. Positions Gly674–Gly686 are enriched in gly residues. The segment covering Leu687–Thr697 has biased composition (low complexity). Residues Gly734–Gly743 are compositionally biased toward gly residues. 4 stretches are compositionally biased toward low complexity: residues Ser751–Pro778, Leu786–Leu799, Tyr846–Ala868, and Pro877–Pro897. Positions Arg901–Pro912 are enriched in basic and acidic residues. Positions Pro987–Pro997 are enriched in pro residues.

The protein belongs to the fibrillar collagen family. In terms of assembly, trimers of one alpha 2(I) and two alpha 1(I) chains. Interacts (via C-terminus) with TMEM131 (via PapD-L domain); the interaction is direct and is involved in assembly and TRAPPIII ER-to-Golgi transport complex-dependent secretion of collagen. Post-translationally, prolines at the third position of the tripeptide repeating unit (G-X-Y) are hydroxylated in some or all of the chains. As to expression, expressed in bones.

It is found in the secreted. Its subcellular location is the extracellular space. It localises to the extracellular matrix. In terms of biological role, type I collagen is a member of group I collagen (fibrillar forming collagen). This is Collagen alpha-2(I) chain from Doedicurus sp. (South American giant glyptodont).